Consider the following 1556-residue polypeptide: Pentafunctional AROM polypeptide (1556 aa).

A 3-dehydroquinate synthase region spans residues Met1–Asp387. NAD(+) contacts are provided by residues Asp46 to Asn48, Glu84 to Lys87, Gly115 to Val117, and Asp120. Arg131 serves as a coordination point for 7-phospho-2-dehydro-3-deoxy-D-arabino-heptonate. Thr140–Thr141 contacts NAD(+). Residues Asp147 and Lys153 each coordinate 7-phospho-2-dehydro-3-deoxy-D-arabino-heptonate. Lys162 provides a ligand contact to NAD(+). A 7-phospho-2-dehydro-3-deoxy-D-arabino-heptonate-binding site is contributed by Asn163. Residues Phe180 to Thr183 and Asn191 each bind NAD(+). Glu195 is a Zn(2+) binding site. 7-phospho-2-dehydro-3-deoxy-D-arabino-heptonate-binding positions include Glu195–Lys198 and Lys253. The active-site Proton acceptor; for 3-dehydroquinate synthase activity is Glu263. Residues Arg267–Asn271 and His274 each bind 7-phospho-2-dehydro-3-deoxy-D-arabino-heptonate. His274 serves as a coordination point for Zn(2+). The active-site Proton acceptor; for 3-dehydroquinate synthase activity is the His278. His290 and Lys359 together coordinate 7-phospho-2-dehydro-3-deoxy-D-arabino-heptonate. His290 lines the Zn(2+) pocket. The EPSP synthase stretch occupies residues Val400–Val837. Cys819 functions as the For EPSP synthase activity in the catalytic mechanism. The tract at residues Pro858–Ser1049 is shikimate kinase. Gly864–Thr871 provides a ligand contact to ATP. The interval Leu1050 to Glu1266 is 3-dehydroquinase. Residue His1171 is the Proton acceptor; for 3-dehydroquinate dehydratase activity of the active site. The active-site Schiff-base intermediate with substrate; for 3-dehydroquinate dehydratase activity is the Lys1200. Residues Lys1279–Asn1556 form a shikimate dehydrogenase region.

The protein in the N-terminal section; belongs to the sugar phosphate cyclases superfamily. Dehydroquinate synthase family. This sequence in the 2nd section; belongs to the EPSP synthase family. In the 3rd section; belongs to the shikimate kinase family. It in the 4th section; belongs to the type-I 3-dehydroquinase family. The protein in the C-terminal section; belongs to the shikimate dehydrogenase family. In terms of assembly, homodimer. Zn(2+) is required as a cofactor.

It is found in the cytoplasm. The catalysed reaction is 7-phospho-2-dehydro-3-deoxy-D-arabino-heptonate = 3-dehydroquinate + phosphate. The enzyme catalyses 3-dehydroquinate = 3-dehydroshikimate + H2O. It catalyses the reaction shikimate + NADP(+) = 3-dehydroshikimate + NADPH + H(+). It carries out the reaction shikimate + ATP = 3-phosphoshikimate + ADP + H(+). The catalysed reaction is 3-phosphoshikimate + phosphoenolpyruvate = 5-O-(1-carboxyvinyl)-3-phosphoshikimate + phosphate. It participates in metabolic intermediate biosynthesis; chorismate biosynthesis; chorismate from D-erythrose 4-phosphate and phosphoenolpyruvate: step 2/7. The protein operates within metabolic intermediate biosynthesis; chorismate biosynthesis; chorismate from D-erythrose 4-phosphate and phosphoenolpyruvate: step 3/7. Its pathway is metabolic intermediate biosynthesis; chorismate biosynthesis; chorismate from D-erythrose 4-phosphate and phosphoenolpyruvate: step 4/7. It functions in the pathway metabolic intermediate biosynthesis; chorismate biosynthesis; chorismate from D-erythrose 4-phosphate and phosphoenolpyruvate: step 5/7. It participates in metabolic intermediate biosynthesis; chorismate biosynthesis; chorismate from D-erythrose 4-phosphate and phosphoenolpyruvate: step 6/7. In terms of biological role, the AROM polypeptide catalyzes 5 consecutive enzymatic reactions in prechorismate polyaromatic amino acid biosynthesis. The sequence is that of Pentafunctional AROM polypeptide from Yarrowia lipolytica (strain CLIB 122 / E 150) (Yeast).